We begin with the raw amino-acid sequence, 274 residues long: Large ribosomal subunit protein uL2 (274 aa).

Disordered regions lie at residues 28 to 53 (APYA…TVRH) and 223 to 274 (VAMN…RRNK). Residues 39–48 (KSGGRNNNGR) show a composition bias toward low complexity.

It belongs to the universal ribosomal protein uL2 family. As to quaternary structure, part of the 50S ribosomal subunit. Forms a bridge to the 30S subunit in the 70S ribosome.

In terms of biological role, one of the primary rRNA binding proteins. Required for association of the 30S and 50S subunits to form the 70S ribosome, for tRNA binding and peptide bond formation. It has been suggested to have peptidyltransferase activity; this is somewhat controversial. Makes several contacts with the 16S rRNA in the 70S ribosome. The chain is Large ribosomal subunit protein uL2 from Pseudoalteromonas atlantica (strain T6c / ATCC BAA-1087).